A 226-amino-acid chain; its full sequence is V-type proton ATPase subunit E 2 (226 aa).

This sequence belongs to the V-ATPase E subunit family. As to quaternary structure, V-ATPase is a heteromultimeric enzyme made up of two complexes: the ATP-hydrolytic V1 complex and the proton translocation V0 complex. The V1 complex consists of three catalytic AB heterodimers that form a heterohexamer, three peripheral stalks each consisting of EG heterodimers, one central rotor including subunits D and F, and the regulatory subunits C and H. The proton translocation complex V0 consists of the proton transport subunit a, a ring of proteolipid subunits c9c'', rotary subunit d, subunits e and f, and the accessory subunits ATP6AP1/Ac45 and ATP6AP2/PRR.

Functionally, subunit of the V1 complex of vacuolar(H+)-ATPase (V-ATPase), a multisubunit enzyme composed of a peripheral complex (V1) that hydrolyzes ATP and a membrane integral complex (V0) that translocates protons. V-ATPase is responsible for acidifying and maintaining the pH of intracellular compartments and in some cell types, is targeted to the plasma membrane, where it is responsible for acidifying the extracellular environment. The sequence is that of V-type proton ATPase subunit E 2 (ATP6V1E2) from Bos taurus (Bovine).